The sequence spans 228 residues: 5'-methylthioadenosine/S-adenosylhomocysteine nucleosidase (228 aa).

Catalysis depends on Glu11, which acts as the Proton acceptor. Residues Gly77, Ile151, and 172–173 (ME) contribute to the substrate site. Catalysis depends on Asp196, which acts as the Proton donor.

Belongs to the PNP/UDP phosphorylase family. MtnN subfamily.

It catalyses the reaction S-adenosyl-L-homocysteine + H2O = S-(5-deoxy-D-ribos-5-yl)-L-homocysteine + adenine. The catalysed reaction is S-methyl-5'-thioadenosine + H2O = 5-(methylsulfanyl)-D-ribose + adenine. It carries out the reaction 5'-deoxyadenosine + H2O = 5-deoxy-D-ribose + adenine. The protein operates within amino-acid biosynthesis; L-methionine biosynthesis via salvage pathway; S-methyl-5-thio-alpha-D-ribose 1-phosphate from S-methyl-5'-thioadenosine (hydrolase route): step 1/2. Functionally, catalyzes the irreversible cleavage of the glycosidic bond in both 5'-methylthioadenosine (MTA) and S-adenosylhomocysteine (SAH/AdoHcy) to adenine and the corresponding thioribose, 5'-methylthioribose and S-ribosylhomocysteine, respectively. Also cleaves 5'-deoxyadenosine, a toxic by-product of radical S-adenosylmethionine (SAM) enzymes, into 5-deoxyribose and adenine. The chain is 5'-methylthioadenosine/S-adenosylhomocysteine nucleosidase from Staphylococcus aureus (strain JH1).